Reading from the N-terminus, the 477-residue chain is MNKKSLWKLILILAIPCIIGFMPAPAGLSELAWVLFGIYLAAIVGLVIKPFPEPVVLLIAVAASMVVVGNLSDGAFKTTAVLSGYSSGTTWLVFSAFTLSAAFVTTGLGKRIAYLLIGKIGNTTLGLGYVTVFLDLVLAPATPSNTARAGGIVLPIINSVAVALGSEPEKSPRRVGHYLMMSIYMVTKTTSYMFFTAMAGNILALKMINDILHLQISWGGWALAAGLPGIIMLLVTPLVIYTMYPPEIKKVDNKTIAKAGLAELGPMKIREKMLLGVFVLALLGWIFSKSLGVDESTVAIVVMATMLLLGIVTWEDVVKNKGGWNTLIWYGGIIGLSSLLSKVKFFEWLAEVFKNNLAFDGHGNVAFFVIIFLSIIVRYFFASGSAYIVAMLPVFAMLANVSGAPLMLTALALLFSNSYGGMVTHYGGAAGPVIFGVGYNDIKSWWLVGAVLTILTFLVHITLGVWWWNMLIGWNML.

The Cytoplasmic segment spans residues M1–S5. Residues L6 to A26 traverse the membrane as a helical segment. Position 27 (G27) is a topological domain, periplasmic. The chain crosses the membrane as a helical span at residues L28–I48. Residues K49–P50 are Cytoplasmic-facing. A helical membrane pass occupies residues F51–L71. At S72–S87 the chain is on the periplasmic side. The helical transmembrane segment at G88 to L108 threads the bilayer. Residues G109 to R148 lie on the Cytoplasmic side of the membrane. The chain crosses the membrane as a helical span at residues A149–E169. Residues K170–G219 lie on the Periplasmic side of the membrane. The chain crosses the membrane as a helical span at residues G220–I240. Over Y241–K272 the chain is Cytoplasmic. The chain crosses the membrane as a helical span at residues M273 to V293. The Periplasmic segment spans residues D294–T297. The helical transmembrane segment at V298–V318 threads the bilayer. The Cytoplasmic portion of the chain corresponds to K319–N356. A helical transmembrane segment spans residues L357–V377. A topological domain (periplasmic) is located at residue R378. The chain crosses the membrane as a helical span at residues Y379–A399. Residues N400–W445 are Cytoplasmic-facing. A helical transmembrane segment spans residues W446–W466. Topologically, residues W467 to L477 are periplasmic.

This sequence belongs to the SLC13A/DASS transporter (TC 2.A.47) family. DIT1 subfamily.

Its subcellular location is the cell inner membrane. The chain is Inner membrane protein YbhI (ybhI) from Escherichia coli (strain K12).